A 375-amino-acid polypeptide reads, in one-letter code: Ornithine transcarbamylase, chloroplastic (375 aa).

The transit peptide at 1-53 (MAAAMASHVSTARSPALSFSSSSSSFFPGTTLRRFSAVSLPSPALPRLRVSCQ) directs the protein to the chloroplast. The residue at position 54 (A54) is an N-acetylalanine. Residues 123 to 126 (SMRT), R174, H201, and Q204 contribute to the carbamoyl phosphate site. L-ornithine-binding residues include N232, D293, S297, and M298. C333 serves as the catalytic Proton acceptor. Carbamoyl phosphate-binding positions include 333 to 334 (CL) and R361.

It belongs to the aspartate/ornithine carbamoyltransferase superfamily. OTCase family.

Its subcellular location is the plastid. The protein localises to the chloroplast. The catalysed reaction is carbamoyl phosphate + L-ornithine = L-citrulline + phosphate + H(+). This chain is Ornithine transcarbamylase, chloroplastic (OTC), found in Arabidopsis thaliana (Mouse-ear cress).